A 398-amino-acid chain; its full sequence is Enoyl-[acyl-carrier-protein] reductase [NADH] (398 aa).

NAD(+) contacts are provided by residues 48-53 (GASTGY), 74-75 (FE), 111-112 (DA), and 139-140 (LA). Tyr-225 provides a ligand contact to substrate. Residue Tyr-235 is the Proton donor of the active site. NAD(+)-binding positions include Lys-244 and 273–275 (VVT).

The protein belongs to the TER reductase family. As to quaternary structure, monomer.

The enzyme catalyses a 2,3-saturated acyl-[ACP] + NAD(+) = a (2E)-enoyl-[ACP] + NADH + H(+). It functions in the pathway lipid metabolism; fatty acid biosynthesis. Its function is as follows. Involved in the final reduction of the elongation cycle of fatty acid synthesis (FAS II). Catalyzes the reduction of a carbon-carbon double bond in an enoyl moiety that is covalently linked to an acyl carrier protein (ACP). The protein is Enoyl-[acyl-carrier-protein] reductase [NADH] of Paraburkholderia phytofirmans (strain DSM 17436 / LMG 22146 / PsJN) (Burkholderia phytofirmans).